The following is a 150-amino-acid chain: Galectin-1 (150 aa).

Residues 9–141 enclose the Galectin domain; that stretch reads NQIKLQDDFK…FSSPVTVDIH (133 aa). H51, R55, N64, and E75 together coordinate a carbohydrate.

Homotetramer. Oligomerization is required for carbohydrate binding. Most abundant in fruiting bodies. Very low levels of expression in asexual vegetative mycelia.

It is found in the secreted. It localises to the extracellular space. Its subcellular location is the extracellular matrix. The protein localises to the cell wall. The protein resides in the endomembrane system. In terms of biological role, binds lactose. May play a role in fruiting body formation. In Coprinopsis cinerea (strain Okayama-7 / 130 / ATCC MYA-4618 / FGSC 9003) (Inky cap fungus), this protein is Galectin-1 (Cgl1).